We begin with the raw amino-acid sequence, 215 residues long: tRNA (guanine-N(7)-)-methyltransferase (215 aa).

The S-adenosyl-L-methionine site is built by Glu44, Glu69, Asp96, and Asp118. Asp118 is an active-site residue. Substrate-binding positions include Lys122, Asp154, and 191–194 (TEYE).

Belongs to the class I-like SAM-binding methyltransferase superfamily. TrmB family.

It catalyses the reaction guanosine(46) in tRNA + S-adenosyl-L-methionine = N(7)-methylguanosine(46) in tRNA + S-adenosyl-L-homocysteine. It functions in the pathway tRNA modification; N(7)-methylguanine-tRNA biosynthesis. In terms of biological role, catalyzes the formation of N(7)-methylguanine at position 46 (m7G46) in tRNA. The sequence is that of tRNA (guanine-N(7)-)-methyltransferase from Exiguobacterium sp. (strain ATCC BAA-1283 / AT1b).